The following is a 201-amino-acid chain: Dephospho-CoA kinase (201 aa).

The DPCK domain maps to 2–201; the sequence is MIGLTGGIAS…KRWKVIPEDQ (200 aa). 10-15 is an ATP binding site; the sequence is ASGKSS.

It belongs to the CoaE family.

It is found in the cytoplasm. It carries out the reaction 3'-dephospho-CoA + ATP = ADP + CoA + H(+). Its pathway is cofactor biosynthesis; coenzyme A biosynthesis; CoA from (R)-pantothenate: step 5/5. Its function is as follows. Catalyzes the phosphorylation of the 3'-hydroxyl group of dephosphocoenzyme A to form coenzyme A. This is Dephospho-CoA kinase from Halalkalibacterium halodurans (strain ATCC BAA-125 / DSM 18197 / FERM 7344 / JCM 9153 / C-125) (Bacillus halodurans).